A 481-amino-acid polypeptide reads, in one-letter code: Beta-amyrin 16-beta-monooxygenase (481 aa).

The helical transmembrane segment at 4–24 (LFIIISLVIVILTTIFILSNL) threads the bilayer. Cys428 is a binding site for heme.

The protein belongs to the cytochrome P450 family. Requires heme as cofactor. As to expression, highly expressed in roots. Expressed at very low levels in leaves and petals.

The protein localises to the membrane. The catalysed reaction is beta-amyrin + reduced [NADPH--hemoprotein reductase] + O2 = maniladiol + oxidized [NADPH--hemoprotein reductase] + H2O + H(+). The enzyme catalyses oleanolate + reduced [NADPH--hemoprotein reductase] + O2 = cochalate + oxidized [NADPH--hemoprotein reductase] + H2O + H(+). Its function is as follows. Involved in triterpenoid saponin biosynthesis in roots. Catalyzes the hydroxylation of beta-amyrin at the C-16 beta position to form maniladiol. Is also able to oxidize oleanolat to cochalate. Has weak activity catalyzing the three-step oxidation at C-28 of beta-amyrin to form oleanolate. This is Beta-amyrin 16-beta-monooxygenase from Platycodon grandiflorus (Balloon flower).